The following is a 143-amino-acid chain: ATP synthase subunit b' (143 aa).

Residues 6–26 (ATLPLMALQFVVLAFLLNAIF) traverse the membrane as a helical segment.

This sequence belongs to the ATPase B chain family. F-type ATPases have 2 components, F(1) - the catalytic core - and F(0) - the membrane proton channel. F(1) has five subunits: alpha(3), beta(3), gamma(1), delta(1), epsilon(1). F(0) has four main subunits: a(1), b(1), b'(1) and c(10-14). The alpha and beta chains form an alternating ring which encloses part of the gamma chain. F(1) is attached to F(0) by a central stalk formed by the gamma and epsilon chains, while a peripheral stalk is formed by the delta, b and b' chains.

The protein localises to the cellular thylakoid membrane. F(1)F(0) ATP synthase produces ATP from ADP in the presence of a proton or sodium gradient. F-type ATPases consist of two structural domains, F(1) containing the extramembraneous catalytic core and F(0) containing the membrane proton channel, linked together by a central stalk and a peripheral stalk. During catalysis, ATP synthesis in the catalytic domain of F(1) is coupled via a rotary mechanism of the central stalk subunits to proton translocation. In terms of biological role, component of the F(0) channel, it forms part of the peripheral stalk, linking F(1) to F(0). The b'-subunit is a diverged and duplicated form of b found in plants and photosynthetic bacteria. The protein is ATP synthase subunit b' of Synechocystis sp. (strain ATCC 27184 / PCC 6803 / Kazusa).